Consider the following 181-residue polypeptide: MINVIANRYAEALFQLGEEENSTDVLFKELEKVVDMMTKVSKDFYKVLKSPLVSKSEKKNLVEIIFSKEVSSNIKNFLKVLVDKDRISYLEDIELAYKELLNKKNNVIDGVAISAIPMSETDIKELEVKLSNKYNKNVTIENVVDKTILGGVLVRIGNEQIDGTVKTRLDKMKEKLSEVIS.

It belongs to the ATPase delta chain family. As to quaternary structure, F-type ATPases have 2 components, F(1) - the catalytic core - and F(0) - the membrane proton channel. F(1) has five subunits: alpha(3), beta(3), gamma(1), delta(1), epsilon(1). F(0) has three main subunits: a(1), b(2) and c(10-14). The alpha and beta chains form an alternating ring which encloses part of the gamma chain. F(1) is attached to F(0) by a central stalk formed by the gamma and epsilon chains, while a peripheral stalk is formed by the delta and b chains.

It localises to the cell membrane. In terms of biological role, f(1)F(0) ATP synthase produces ATP from ADP in the presence of a proton or sodium gradient. F-type ATPases consist of two structural domains, F(1) containing the extramembraneous catalytic core and F(0) containing the membrane proton channel, linked together by a central stalk and a peripheral stalk. During catalysis, ATP synthesis in the catalytic domain of F(1) is coupled via a rotary mechanism of the central stalk subunits to proton translocation. Its function is as follows. This protein is part of the stalk that links CF(0) to CF(1). It either transmits conformational changes from CF(0) to CF(1) or is implicated in proton conduction. The sequence is that of ATP synthase subunit delta from Clostridioides difficile (strain 630) (Peptoclostridium difficile).